Consider the following 95-residue polypeptide: Protein Vpr (95 aa).

A homooligomerization region spans residues 1–42 (MERAPEDAGPQREPYNEWALELLEELKNEAVRHFPRIWLHGL). Phosphoserine; by host occurs at positions 79, 93, and 95.

Belongs to the HIV-1 VPR protein family. In terms of assembly, homooligomer, may form homodimer. Interacts with p6-gag region of the Pr55 Gag precursor protein through a (Leu-X-X)4 motif near the C-terminus of the P6gag protein. Interacts with host UNG. May interact with host RAD23A/HHR23A. Interacts with host VPRBP/DCAF1, leading to hijack the CUL4A-RBX1-DDB1-DCAF1/VPRBP complex, mediating ubiquitination of host proteins such as TERT and ZGPAT and arrest of the cell cycle in G2 phase. Post-translationally, phosphorylated on several residues by host. These phosphorylations regulate VPR activity for the nuclear import of the HIV-1 pre-integration complex.

The protein resides in the virion. Its subcellular location is the host nucleus. It is found in the host extracellular space. During virus replication, may deplete host UNG protein, and incude G2-M cell cycle arrest. Acts by targeting specific host proteins for degradation by the 26S proteasome, through association with the cellular CUL4A-DDB1 E3 ligase complex by direct interaction with host VPRPB/DCAF-1. Cell cycle arrest reportedly occurs within hours of infection and is not blocked by antiviral agents, suggesting that it is initiated by the VPR carried into the virion. Additionally, VPR induces apoptosis in a cell cycle dependent manner suggesting that these two effects are mechanistically linked. Detected in the serum and cerebrospinal fluid of AIDS patient, VPR may also induce cell death to bystander cells. In terms of biological role, during virus entry, plays a role in the transport of the viral pre-integration (PIC) complex to the host nucleus. This function is crucial for viral infection of non-dividing macrophages. May act directly at the nuclear pore complex, by binding nucleoporins phenylalanine-glycine (FG)-repeat regions. This chain is Protein Vpr, found in Human immunodeficiency virus type 1 group N (isolate YBF30) (HIV-1).